A 202-amino-acid chain; its full sequence is Holliday junction branch migration complex subunit RuvA (202 aa).

The segment at 1–63 is domain I; it reads MIAFLSGRVV…EDSLTLFGFA (63 aa). The tract at residues 64 to 142 is domain II; it reads DDDERDTFER…EPGGDTAATP (79 aa). Residues 143 to 152 are flexible linker; the sequence is EQSAAAAPRN. The segment at 152–202 is domain III; it reads NWRAQVVSGLVNLGWSTREAEAAADAVAAEAGEQPDVAALLRSALRRLSRA.

It belongs to the RuvA family. Homotetramer. Forms an RuvA(8)-RuvB(12)-Holliday junction (HJ) complex. HJ DNA is sandwiched between 2 RuvA tetramers; dsDNA enters through RuvA and exits via RuvB. An RuvB hexamer assembles on each DNA strand where it exits the tetramer. Each RuvB hexamer is contacted by two RuvA subunits (via domain III) on 2 adjacent RuvB subunits; this complex drives branch migration. In the full resolvosome a probable DNA-RuvA(4)-RuvB(12)-RuvC(2) complex forms which resolves the HJ.

Its subcellular location is the cytoplasm. The RuvA-RuvB-RuvC complex processes Holliday junction (HJ) DNA during genetic recombination and DNA repair, while the RuvA-RuvB complex plays an important role in the rescue of blocked DNA replication forks via replication fork reversal (RFR). RuvA specifically binds to HJ cruciform DNA, conferring on it an open structure. The RuvB hexamer acts as an ATP-dependent pump, pulling dsDNA into and through the RuvAB complex. HJ branch migration allows RuvC to scan DNA until it finds its consensus sequence, where it cleaves and resolves the cruciform DNA. The sequence is that of Holliday junction branch migration complex subunit RuvA from Thermobifida fusca (strain YX).